A 319-amino-acid chain; its full sequence is Probable NAD(P)H-dependent D-xylose reductase xyl1 (319 aa).

Asn26 is a glycosylation site (N-linked (GlcNAc...) asparagine). Tyr50 acts as the Proton donor in catalysis. Position 112 (His112) interacts with substrate. Asn141 and Asn167 each carry an N-linked (GlcNAc...) asparagine glycan. Residues 166–167 (SN), 215–224 (SSFGPLSFLE), and 271–281 (KSNNPQRLKQN) contribute to the NAD(+) site.

It belongs to the aldo/keto reductase family.

It carries out the reaction xylitol + NAD(+) = D-xylose + NADH + H(+). It catalyses the reaction xylitol + NADP(+) = D-xylose + NADPH + H(+). The protein operates within carbohydrate metabolism; D-xylose degradation. Catalyzes the initial reaction in the xylose utilization pathway by reducing D-xylose into xylitol. Xylose is a major component of hemicelluloses such as xylan. Most fungi utilize D-xylose via three enzymatic reactions, xylose reductase (XR), xylitol dehydrogenase (XDH), and xylulokinase, to form xylulose 5-phosphate, which enters pentose phosphate pathway. This Aspergillus niger (strain ATCC MYA-4892 / CBS 513.88 / FGSC A1513) protein is Probable NAD(P)H-dependent D-xylose reductase xyl1 (xyl1).